The primary structure comprises 511 residues: ESX-1 secretion system protein EccD1 (511 aa).

N-acetylserine is present on Ser-2. Over 2–143 (SAPAVAAGPT…PEFDRTALNR (142 aa)) the chain is Cytoplasmic. A helical transmembrane segment spans residues 144–164 (FVGAAIPLLTAPVIGMAMRAW). Topologically, residues 165 to 170 (WETGRS) are periplasmic. The chain crosses the membrane as a helical span at residues 171 to 191 (LWWPLAIGILGIAVLVGSFVA). The Cytoplasmic portion of the chain corresponds to 192–202 (NRFYQSGHLAE). A helical transmembrane segment spans residues 203 to 223 (CLLVTTYLLIATAAALAVPLP). Over 224–227 (RGVN) the chain is Periplasmic. Residues 228 to 248 (SLGAPQVAGAATAVLFLTLMT) form a helical membrane-spanning segment. The Cytoplasmic segment spans residues 249-257 (RGGPRKRHE). A helical membrane pass occupies residues 258–278 (LASFAVITAIAVIAAAAAFGY). The Periplasmic segment spans residues 279–285 (GYQDWVP). Residues 286–306 (AGGIAFGLFIVTNAAKLTVAV) form a helical membrane-spanning segment. Residues 307–367 (ARIALPPIPV…TERSKLAKQL (61 aa)) are Cytoplasmic-facing. 2 helical membrane passes run 368–388 (LIGYVTSGTLILAAGAIAVVV) and 389–409 (RGHFFVHSLVVAGLITTVCGF). Residues 410 to 420 (RSRLYAERWCA) are Cytoplasmic-facing. A helical transmembrane segment spans residues 421–441 (WALLAATVAIPTGLTAKLIIW). Residues 442-444 (YPH) are Periplasmic-facing. The helical transmembrane segment at 445 to 465 (YAWLLLSVYLTVALVALVVVG) threads the bilayer. Topologically, residues 466–482 (SMAHVRRVSPVVKRTLE) are cytoplasmic. A helical membrane pass occupies residues 483–503 (LIDGAMIAAIIPMLLWITGVY). At 504–511 (DTVRNIRF) the chain is on the periplasmic side.

Belongs to the EccD/Snm4 family. As to quaternary structure, possibly a homodimer. Part of the ESX-1 / type VII secretion system (T7SS), which is composed of cytosolic and membrane components. The ESX-1 membrane complex is composed of EccB1, EccCa1, EccCb1, EccD1 and EccE1.

It is found in the cell inner membrane. Functionally, part of the ESX-1 specialized secretion system, which delivers several virulence factors to host cells during infection, including the key virulence factors EsxA (ESAT-6) and EsxB (CFP-10). This is ESX-1 secretion system protein EccD1 from Mycobacterium tuberculosis (strain ATCC 25618 / H37Rv).